We begin with the raw amino-acid sequence, 342 residues long: Uroporphyrinogen decarboxylase (342 aa).

Residues 24–28 (RQAGR), aspartate 74, tyrosine 149, serine 204, and histidine 319 each bind substrate.

Belongs to the uroporphyrinogen decarboxylase family. In terms of assembly, homodimer.

The protein resides in the cytoplasm. The enzyme catalyses uroporphyrinogen III + 4 H(+) = coproporphyrinogen III + 4 CO2. It functions in the pathway porphyrin-containing compound metabolism; protoporphyrin-IX biosynthesis; coproporphyrinogen-III from 5-aminolevulinate: step 4/4. Catalyzes the decarboxylation of four acetate groups of uroporphyrinogen-III to yield coproporphyrinogen-III. In Chelativorans sp. (strain BNC1), this protein is Uroporphyrinogen decarboxylase.